A 146-amino-acid polypeptide reads, in one-letter code: Hemoglobin subunit beta-2 (146 aa).

Residues lysine 2 to cysteine 146 enclose the Globin domain. Heme b contacts are provided by histidine 63 and histidine 92.

The protein belongs to the globin family. As to quaternary structure, heterotetramer of two alpha chains and two beta chains. In terms of tissue distribution, red blood cells.

Involved in oxygen transport from gills to the various peripheral tissues. This is Hemoglobin subunit beta-2 (hbb2) from Lycodes reticulatus (Arctic eelpout).